An 82-amino-acid chain; its full sequence is RNA-binding protein Hfq (82 aa).

The Sm domain maps to 9–69 (DHFLNQLRKE…ISTFSPARNV (61 aa)).

This sequence belongs to the Hfq family. Homohexamer.

Functionally, RNA chaperone that binds small regulatory RNA (sRNAs) and mRNAs to facilitate mRNA translational regulation in response to envelope stress, environmental stress and changes in metabolite concentrations. Also binds with high specificity to tRNAs. The polypeptide is RNA-binding protein Hfq (Exiguobacterium sp. (strain ATCC BAA-1283 / AT1b)).